The primary structure comprises 462 residues: Tryptophan dimethylallyltransferase ifgA (462 aa).

Residues 83 to 84 and Glu92 contribute to the L-tryptophan site; that span reads IL. Residues Arg103, Lys189, and Tyr191 each contribute to the substrate site. L-tryptophan contacts are provided by Tyr193 and Arg246. The substrate site is built by Arg259, Lys261, Tyr263, Gln345, and Tyr347.

The protein belongs to the tryptophan dimethylallyltransferase family. As to quaternary structure, homodimer.

It carries out the reaction L-tryptophan + dimethylallyl diphosphate = 4-(3-methylbut-2-enyl)-L-tryptophan + diphosphate. It functions in the pathway alkaloid biosynthesis; ergot alkaloid biosynthesis. Its function is as follows. Tryptophan dimethylallyltransferase; part of the gene cluster that mediates the biosynthesis of isofumigaclavines, fungal ergot alkaloids. The tryptophan dimethylallyltransferase ifgA catalyzes the first step of ergot alkaloid biosynthesis by condensing dimethylallyl diphosphate (DMAP) and tryptophan to form 4-dimethylallyl-L-tryptophan. The second step is catalyzed by the methyltransferase ifgB that methylates 4-dimethylallyl-L-tryptophan in the presence of S-adenosyl-L-methionine, resulting in the formation of N-methyl-dimethylallyl-L-tryptophan. The catalase ifgD and the FAD-dependent oxidoreductase ifgC then transform N-methyl-dimethylallyl-L-tryptophan to chanoclavine-I which is further oxidized by ifgE in the presence of NAD(+), resulting in the formation of chanoclavine-I aldehyde. The chanoclavine-I aldehyde reductases ifgG and/or fgaOx3 reduce chanoclavine-I aldehyde to dihydrochanoclavine-I aldehyde that spontaneously dehydrates to form 6,8-dimethyl-6,7-didehydroergoline. The festuclavine dehydrogenases ifgF1 and/or ifgF2 then catalyze the reduction of 6,8-dimethyl-6,7-didehydroergoline to form festuclavine. Hydrolysis of festuclavine by a yet undetermined cytochrome P450 monooxygenase (called ifgH) then leads to the formation of isofumigaclavine B which is in turn acetylated by ifgI to isofumigaclavine A. Penicillium roqueforti has interestingly at least two sets of genes for the consumption of chanoclavine-I aldehyde on three different loci, the OYEs ifgG/fgaOx3 and the festuclavine synthase homologs ifgF1/ifgF2. The reason for the duplication of these genes is unclear, probably to ensure the conversion of chanoclavine-I aldehyde by differential gene expression under various environmental conditions. The polypeptide is Tryptophan dimethylallyltransferase ifgA (Penicillium roqueforti (strain FM164)).